Reading from the N-terminus, the 433-residue chain is Enolase (433 aa).

A (2R)-2-phosphoglycerate-binding site is contributed by Gln167. Catalysis depends on Glu209, which acts as the Proton donor. Positions 246, 291, and 318 each coordinate Mg(2+). Residues Lys343, Arg372, Ser373, and Lys394 each contribute to the (2R)-2-phosphoglycerate site. Lys343 acts as the Proton acceptor in catalysis.

It belongs to the enolase family. As to quaternary structure, component of the RNA degradosome, a multiprotein complex involved in RNA processing and mRNA degradation. It depends on Mg(2+) as a cofactor.

It is found in the cytoplasm. The protein localises to the secreted. It localises to the cell surface. The enzyme catalyses (2R)-2-phosphoglycerate = phosphoenolpyruvate + H2O. Its pathway is carbohydrate degradation; glycolysis; pyruvate from D-glyceraldehyde 3-phosphate: step 4/5. Catalyzes the reversible conversion of 2-phosphoglycerate (2-PG) into phosphoenolpyruvate (PEP). It is essential for the degradation of carbohydrates via glycolysis. The sequence is that of Enolase from Shewanella piezotolerans (strain WP3 / JCM 13877).